The chain runs to 356 residues: Tyrosine recombinase XerS (356 aa).

Residues 16-121 (LMPWYVLEYY…ALSSLYKYLT (106 aa)) enclose the Core-binding (CB) domain. One can recognise a Tyr recombinase domain in the interval 169 to 354 (GFLTYIDQEH…VNDEQKNALD (186 aa)). Active-site residues include Arg210, Lys234, His306, Arg309, and His332. The active-site O-(3'-phospho-DNA)-tyrosine intermediate is the Tyr341.

This sequence belongs to the 'phage' integrase family. XerS subfamily.

The protein resides in the cytoplasm. FtsK is required for recombination. Its function is as follows. Site-specific tyrosine recombinase, which acts by catalyzing the cutting and rejoining of the recombining DNA molecules. Essential to convert dimers of the bacterial chromosome into monomers to permit their segregation at cell division. This chain is Tyrosine recombinase XerS, found in Streptococcus pneumoniae serotype 2 (strain D39 / NCTC 7466).